Here is a 110-residue protein sequence, read N- to C-terminus: Snake venom vascular endothelial growth factor toxin (110 aa).

Pyrrolidone carboxylic acid is present on glutamine 1. 3 cysteine pairs are disulfide-bonded: cysteine 14–cysteine 56, cysteine 45–cysteine 91, and cysteine 49–cysteine 93.

Belongs to the PDGF/VEGF growth factor family. Snake venom VEGF subfamily. As to quaternary structure, homodimer; disulfide-linked. Expressed by the venom gland.

It localises to the secreted. In terms of biological role, snake venom VEGFs that may contribute to venom dispersion and prey subjugation by inducing vascular permeability and hypotension. This protein potently stimulates dermal human microvascular endothelial cell (dHMVEC) proliferation in a VEGFR-2 dependent manner. This stimulatory effect is correlated with activation of the MAPK Erk1/2 signaling pathway. It also appears to be a chemoattractant for migration of these cells and stimulates their radial migration in a collagen gel. In vivo, it induces angiogenesis in a Japanese quail assay. This pro-angiogenic effect may also be related to its interaction with VEGFR-2. In addition, it may induce an increase in capillary permeability after intradermal injection, as well as a drastic hypotensive effect after intravenous injection. The hypotension is mediated by nitric oxide (NO), which is produced by VEGF-activated endothelium NO synthase. This Daboia palaestinae (Palestine viper) protein is Snake venom vascular endothelial growth factor toxin.